A 420-amino-acid chain; its full sequence is Proteinase-activated receptor 1 (420 aa).

Residues 1-20 form the signal peptide; sequence MMELRVLLLLLLLTLLGAMG. A propeptide spans 21–42 (removed for receptor activation); the sequence is SLCLANSDTQAKGAHSNNMTIK. Residue asparagine 38 is glycosylated (N-linked (GlcNAc...) asparagine). Residues 43 to 101 lie on the Extracellular side of the membrane; it reads TFRIFDDSESEFEEIPWDELDESGEGSGDQAPVSRSARKPIRRNITKEAEQYLSSQWLT. Positions 61–80 are disordered; sequence ELDESGEGSGDQAPVSRSAR. Asparagine 86 is a glycosylation site (N-linked (GlcNAc...) asparagine). Residues 102-127 form a helical membrane-spanning segment; that stretch reads KFVPSLYTVVFIVGLPLNLLAIIIFL. Residues 128-136 are Cytoplasmic-facing; it reads FKMKVRKPA. A helical transmembrane segment spans residues 137-156; it reads VVYMLNLAIADVFFVSVLPF. The Extracellular segment spans residues 157 to 175; that stretch reads KIAYHLSGNDWLFGPGMCR. Cysteines 174 and 253 form a disulfide. A helical membrane pass occupies residues 176 to 197; sequence IVTAIFYCNMYCSVLLIASISV. Residues 198–217 are Cytoplasmic-facing; it reads DRFLAVVYPMHSLSWRTMSR. The chain crosses the membrane as a helical span at residues 218 to 238; it reads AYMACSFIWLISIASTIPLLV. Residues 239–267 lie on the Extracellular side of the membrane; sequence TEQTQKIPRLDITTCHDVLDLKDLKDFYI. A helical transmembrane segment spans residues 268 to 287; the sequence is YYFSSFCLLFFFVPFIITTI. Topologically, residues 288-310 are cytoplasmic; it reads CYIGIIRSLSSSSIENSCKKTRA. Residues 311 to 333 form a helical membrane-spanning segment; the sequence is LFLAVVVLCVFIICFGPTNVLFL. The Extracellular portion of the chain corresponds to 334–345; that stretch reads THYLQEANEFLY. A helical transmembrane segment spans residues 346 to 369; sequence FAYILSACVGSVSCCLDPLIYYYA. Residues 370–420 are Cytoplasmic-facing; it reads SSQCQRYLYSLLCCRKVSEPGSSTGQLMSTAMKNDNCSTNAKSSIYKKLLA.

This sequence belongs to the G-protein coupled receptor 1 family. Proteolytic cleavage generates a new N-terminus that functions as a tethered ligand.

The protein localises to the cell membrane. High affinity receptor that binds the activated thrombin, leading to calcium release from intracellular stores. The thrombin-activated receptor signaling pathway is mediated through PTX-insensitive G proteins, activation of phospholipase C resulting in the production of 1D-myo-inositol 1,4,5-trisphosphate (InsP3) which binds to InsP3 receptors causing calcium release from the stores. The polypeptide is Proteinase-activated receptor 1 (Xenopus laevis (African clawed frog)).